The following is a 142-amino-acid chain: Large ribosomal subunit protein uL11 (142 aa).

The protein belongs to the universal ribosomal protein uL11 family. In terms of assembly, part of the ribosomal stalk of the 50S ribosomal subunit. Interacts with L10 and the large rRNA to form the base of the stalk. L10 forms an elongated spine to which L12 dimers bind in a sequential fashion forming a multimeric L10(L12)X complex. In terms of processing, one or more lysine residues are methylated.

Its function is as follows. Forms part of the ribosomal stalk which helps the ribosome interact with GTP-bound translation factors. The chain is Large ribosomal subunit protein uL11 from Vibrio vulnificus (strain CMCP6).